The sequence spans 148 residues: Probable histone H2B.2 (148 aa).

Basic and acidic residues predominate over residues 1–32 (MAPKGEKKPAEKKPAEEKKSTVAEKAPAEKKP). Residues 1–57 (MAPKGEKKPAEKKPAEEKKSTVAEKAPAEKKPKAGKKLPKEGGSAAGEKKKKRSKKS) form a disordered region. N6-acetyllysine occurs at positions 7, 36, and 37. A Glycyl lysine isopeptide (Lys-Gly) (interchain with G-Cter in ubiquitin) cross-link involves residue Lys-144.

It belongs to the histone H2B family. As to quaternary structure, the nucleosome is a histone octamer containing two molecules each of H2A, H2B, H3 and H4 assembled in one H3-H4 heterotetramer and two H2A-H2B heterodimers. The octamer wraps approximately 147 bp of DNA. Post-translationally, can be acetylated to form H2BK6ac, H2BK33ac and H2BK34ac. In terms of processing, monoubiquitinated to form H2BK143ub1; may give a specific tag for epigenetic transcriptional activation.

The protein localises to the nucleus. Its subcellular location is the chromosome. Core component of nucleosome. Nucleosomes wrap and compact DNA into chromatin, limiting DNA accessibility to the cellular machineries which require DNA as a template. Histones thereby play a central role in transcription regulation, DNA repair, DNA replication and chromosomal stability. DNA accessibility is regulated via a complex set of post-translational modifications of histones, also called histone code, and nucleosome remodeling. This chain is Probable histone H2B.2, found in Medicago truncatula (Barrel medic).